We begin with the raw amino-acid sequence, 475 residues long: uncharacterized protein (475 aa).

A helical transmembrane segment spans residues 19 to 39 (LVSAILILSILIWLIITIFFA).

The protein resides in the membrane. This is an uncharacterized protein from Mycoplasma pneumoniae (strain ATCC 29342 / M129 / Subtype 1) (Mycoplasmoides pneumoniae).